A 154-amino-acid polypeptide reads, in one-letter code: MAEENHDEAVRVAELRKKRTFRTFAYRGVELEQLLDLSAEQLVDLFHARARRRMLRGLGPNASRFIRKLRKAKSEAPLNEKPATVKTHLRNMIILPEMVGSVVGIYNGKLFNQVEIRPEMIGHYLGEFSITYKPTKHGRPGIGATHSSRFIPLK.

At Ser63 the chain carries Phosphoserine.

It belongs to the universal ribosomal protein uS19 family. Component of the small ribosomal subunit (SSU). Mature yeast ribosomes consist of a small (40S) and a large (60S) subunit. The 40S small subunit contains 1 molecule of ribosomal RNA (18S rRNA) and at least 33 different proteins. The large 60S subunit contains 3 rRNA molecules (25S, 5.8S and 5S rRNA) and at least 46 different proteins.

The protein localises to the cytoplasm. It localises to the nucleus. Its subcellular location is the nucleolus. Component of the ribosome, a large ribonucleoprotein complex responsible for the synthesis of proteins in the cell. The small ribosomal subunit (SSU) binds messenger RNAs (mRNAs) and translates the encoded message by selecting cognate aminoacyl-transfer RNA (tRNA) molecules. The large subunit (LSU) contains the ribosomal catalytic site termed the peptidyl transferase center (PTC), which catalyzes the formation of peptide bonds, thereby polymerizing the amino acids delivered by tRNAs into a polypeptide chain. The nascent polypeptides leave the ribosome through a tunnel in the LSU and interact with protein factors that function in enzymatic processing, targeting, and the membrane insertion of nascent chains at the exit of the ribosomal tunnel. uS19 is involved in the nuclear export of the small ribosomal subunit precursor. Has a role in the late stage of the assembly of pre-40S particles within the nucleus and controls their export to the cytoplasm. In Schizosaccharomyces pombe (strain 972 / ATCC 24843) (Fission yeast), this protein is Small ribosomal subunit protein uS19B (rps1502).